We begin with the raw amino-acid sequence, 88 residues long: MAEAEKTVRTLTGRVVSDKMDKTITVLIERRVKHPIYGKYVKRSTKLHAHDETNQCHIGDKVTIRETRPMAKTKSWALVDVLERAVEV.

This sequence belongs to the universal ribosomal protein uS17 family. In terms of assembly, part of the 30S ribosomal subunit.

In terms of biological role, one of the primary rRNA binding proteins, it binds specifically to the 5'-end of 16S ribosomal RNA. The polypeptide is Small ribosomal subunit protein uS17 (Pseudomonas fluorescens (strain ATCC BAA-477 / NRRL B-23932 / Pf-5)).